A 596-amino-acid chain; its full sequence is Leucine zipper putative tumor suppressor 1 (596 aa).

Residue Gly2 is the site of N-myristoyl glycine attachment. Disordered stretches follow at residues 136-193 (AILH…SYQL) and 295-324 (YEERPRRCRDELEGPEPKGGNKLKQASQKS). Over residues 153–162 (PPDKPKEQEL) the composition is skewed to basic and acidic residues. Over residues 178–190 (SMSSLPTHSTSSS) the composition is skewed to low complexity. A coiled-coil region spans residues 256 to 374 (ISTDECSIQE…SYEREKTSFG (119 aa)). Basic and acidic residues predominate over residues 295 to 310 (YEERPRRCRDELEGPE).

This sequence belongs to the LZTS family. In terms of assembly, binds EEF1G, TLK2 and CDK1. Phosphorylated on serine residues. Hyperphosphorylated by the cAMP-dependent kinase PKA during cell-cycle progression. In terms of tissue distribution, highly expressed in testis, prostate, spleen, thymus, ovary and brain. Detected at lower levels in heart, placenta, small intestine, colon, liver, kidney, skeletal muscle and pancreas. Not detectable in primary tumors from breast and prostate and in many cancer cell lines.

The protein localises to the cytoplasm. The protein resides in the cell membrane. Its subcellular location is the cell projection. It localises to the dendritic spine. It is found in the postsynaptic density. The protein localises to the synapse. Its function is as follows. Involved in the regulation of cell growth. May stabilize the active CDC2-cyclin B1 complex and thereby contribute to the regulation of the cell cycle and the prevention of uncontrolled cell proliferation. May act as a tumor suppressor. This is Leucine zipper putative tumor suppressor 1 (LZTS1) from Homo sapiens (Human).